The primary structure comprises 443 residues: Mitochondrial distribution and morphology protein 10 (443 aa).

Belongs to the MDM10 family. In terms of assembly, component of the ER-mitochondria encounter structure (ERMES) or MDM complex, composed of MMM1, MDM10, MDM12 and MDM34. Associates with the mitochondrial outer membrane sorting assembly machinery SAM(core) complex.

The protein resides in the mitochondrion outer membrane. Its function is as follows. Component of the ERMES/MDM complex, which serves as a molecular tether to connect the endoplasmic reticulum and mitochondria. Components of this complex are involved in the control of mitochondrial shape and protein biogenesis and may function in phospholipid exchange. MDM10 is involved in the late assembly steps of the general translocase of the mitochondrial outer membrane (TOM complex). Functions in the TOM40-specific route of the assembly of outer membrane beta-barrel proteins, including the association of TOM40 with the receptor TOM22 and small TOM proteins. Can associate with the SAM(core) complex as well as the MDM12-MMM1 complex, both involved in late steps of the major beta-barrel assembly pathway, that is responsible for biogenesis of all outer membrane beta-barrel proteins. May act as a switch that shuttles between both complexes and channels precursor proteins into the TOM40-specific pathway. Plays a role in mitochondrial morphology and in the inheritance of mitochondria. This chain is Mitochondrial distribution and morphology protein 10, found in Pyricularia oryzae (strain 70-15 / ATCC MYA-4617 / FGSC 8958) (Rice blast fungus).